We begin with the raw amino-acid sequence, 274 residues long: Diaminopimelate epimerase (274 aa).

Asn11, Gln44, and Asn64 together coordinate substrate. Cys73 functions as the Proton donor in the catalytic mechanism. Residues 74–75 (GN), Asn157, Asn190, and 208–209 (ER) each bind substrate. Cys217 acts as the Proton acceptor in catalysis. A substrate-binding site is contributed by 218 to 219 (GS).

The protein belongs to the diaminopimelate epimerase family. Homodimer.

It localises to the cytoplasm. The catalysed reaction is (2S,6S)-2,6-diaminopimelate = meso-2,6-diaminopimelate. The protein operates within amino-acid biosynthesis; L-lysine biosynthesis via DAP pathway; DL-2,6-diaminopimelate from LL-2,6-diaminopimelate: step 1/1. Catalyzes the stereoinversion of LL-2,6-diaminopimelate (L,L-DAP) to meso-diaminopimelate (meso-DAP), a precursor of L-lysine and an essential component of the bacterial peptidoglycan. The chain is Diaminopimelate epimerase from Yersinia pseudotuberculosis serotype O:1b (strain IP 31758).